The primary structure comprises 510 residues: MKLKPIEVAEILQKEIANINCLSELEEVGQVITVGDGIAQIYGLANVKSGEVVEFKSGVKGLVLNLENDSVGAVIMGDDNQVQQGDNVKRTKAVLEVPVGKALLGRVVDALGNPIDGKGDIASKEYRHIEMKAPGIIERTSVSEPVQTGIKAIDSLIPIGRGQRELIIGDRQTGKTAIAVDTIINQKQAHSLTNESDKIYCIYVAIGQKRSSVAQIVKKLEDAGAMDYTLIVSATASEAAALQFIAPYSACSMGEYFRDNGMHALIIYDDLSKHAVAYRQISLLLRRPPGREAYPGDVFYLHSRLLERAAKMSEEKGSGSLTALPIIETQAGDVSAYIPTNVISITDGQIFLESELFYKGVRPAVNVGISVSRVGSAAQIKAMKQVAGSVKLELAQFRELESFSQFGSDLDPATKAQIDHGKRLVEILKQAQYHPFPVEEQIVSIYVGTKKYLNDVPLQKVKEFEDKMLTEIRLNKKDILESIKNEQRITEETEQKLKAFLENFVKEFVK.

169 to 176 (GDRQTGKT) provides a ligand contact to ATP.

It belongs to the ATPase alpha/beta chains family. As to quaternary structure, F-type ATPases have 2 components, CF(1) - the catalytic core - and CF(0) - the membrane proton channel. CF(1) has five subunits: alpha(3), beta(3), gamma(1), delta(1), epsilon(1). CF(0) has three main subunits: a(1), b(2) and c(9-12). The alpha and beta chains form an alternating ring which encloses part of the gamma chain. CF(1) is attached to CF(0) by a central stalk formed by the gamma and epsilon chains, while a peripheral stalk is formed by the delta and b chains.

It localises to the cell inner membrane. It catalyses the reaction ATP + H2O + 4 H(+)(in) = ADP + phosphate + 5 H(+)(out). Produces ATP from ADP in the presence of a proton gradient across the membrane. The alpha chain is a regulatory subunit. The chain is ATP synthase subunit alpha from Rickettsia conorii (strain ATCC VR-613 / Malish 7).